Reading from the N-terminus, the 120-residue chain is Transcription elongation factor SPT4 (120 aa).

Residues 1-39 (MSASVPADLRNLRACLLCSLVKSVESFQKEGCENCEDVL) are interaction with spt-5. The C4-type zinc-finger motif lies at 15-35 (CLLCSLVKSVESFQKEGCENC).

The protein belongs to the SPT4 family. In terms of assembly, interacts with spt-5 to form DSIF. DSIF interacts with RNA polymerase II and with the positive transcription elongation factor b complex (P-TEFb complex), which is composed of cdk-9 and cyclin-T (cit-1.1 or cit-1.2).

It is found in the nucleus. May function as a component of the DRB sensitivity-inducing factor complex (DSIF complex), which regulates transcription elongation by RNA polymerase II. DSIF may enhance transcriptional pausing at sites proximal to the promoter, which may in turn facilitate the assembly of an elongation competent RNA polymerase II complex. The sequence is that of Transcription elongation factor SPT4 (spt-4) from Caenorhabditis elegans.